The following is a 210-amino-acid chain: MLTAAGDDELDPVVGPESATEAATPRVLTIISHVMEKLVARNEWLAKQTKGFGKSLEAFHGVRAPSISIAKYLERIYKYTKCSPACFVVGYVYIDRLAHKHPGSLVVSLNVHRLLVTCVMIAAKILDDVHYNNEFYARVGGVSNADLNKMELELLFLLDFRVTVSFRVFESYCFHLEKEMQLNDAVSSLKDIQPMQESLSPASTLSSLYV.

It belongs to the cyclin family. Cyclin U/P subfamily. Interacts with CDKA-1. In terms of tissue distribution, expressed in roots and flowers. Expressed in the shoot apex, leaf primordia and young leaves.

This chain is Cyclin-U1-1 (CYCU1-1), found in Arabidopsis thaliana (Mouse-ear cress).